The following is a 258-amino-acid chain: Phosphate import ATP-binding protein PstB (258 aa).

In terms of domain architecture, ABC transporter spans 5-247 (LDLKGVNIYY…EKIFSNPSQK (243 aa)). ATP is bound at residue 37 to 44 (GPSGCGKT).

Belongs to the ABC transporter superfamily. Phosphate importer (TC 3.A.1.7) family. The complex is composed of two ATP-binding proteins (PstB), two transmembrane proteins (PstC and PstA) and a solute-binding protein (PstS).

Its subcellular location is the cell membrane. It carries out the reaction phosphate(out) + ATP + H2O = ADP + 2 phosphate(in) + H(+). Functionally, part of the ABC transporter complex PstSACB involved in phosphate import. Responsible for energy coupling to the transport system. This chain is Phosphate import ATP-binding protein PstB, found in Mycolicibacterium paratuberculosis (strain ATCC BAA-968 / K-10) (Mycobacterium paratuberculosis).